The following is a 2843-amino-acid chain: Adenomatous polyposis coli protein (2843 aa).

The residue at position 2 (Ala2) is an N-acetylalanine. The stretch at 2–61 forms a coiled coil; it reads AAASYDQLLKQVEALKMENSNLRQELEDNSNHLTKLETEASNMKEVLKQLQGSIEDEAMA. Residues Ser107 and Ser111 each carry the phosphoserine modification. Residues 127-248 adopt a coiled-coil conformation; that stretch reads SRESTGYLEE…ATEAERSSQN (122 aa). The disordered stretch occupies residues 239 to 305; it reads ATEAERSSQN…STHSAPRRLT (67 aa). Basic and acidic residues predominate over residues 241–261; it reads EAERSSQNKHETGSHDAERQN. The span at 271–282 shows a compositional bias: polar residues; sequence MATSGNGQGSTT. Residues 290–299 show a composition bias toward low complexity; sequence SVLSSSSTHS. 7 ARM repeats span residues 453 to 495, 505 to 547, 548 to 591, 592 to 638, 639 to 683, 684 to 725, and 726 to 767; these read LMKL…HYSI, LTNL…IASV, LRNL…VLSA, LWNL…GGGI, LRNV…ACGT, LWNL…SAAA, and LRNL…LDAQ. Ser744, Ser748, and Ser780 each carry phosphoserine. The segment at 828–878 is disordered; the sequence is TTVLPSSSSSRGSLDSSRSEKDRSLERERGIGLGNYHPATENPGTSSKRGL. A compositionally biased stretch (low complexity) spans 833–843; the sequence is SSSSSRGSLDS. Over residues 844-857 the composition is skewed to basic and acidic residues; the sequence is SRSEKDRSLERERG. A compositionally biased stretch (polar residues) spans 869–878; the sequence is NPGTSSKRGL. Ser908 is modified (phosphoserine). 2 disordered regions span residues 923-943 and 958-987; these read RRSS…SENS and RSSN…ESYS. Over residues 927–943 the composition is skewed to polar residues; the sequence is AAHTHSNTYNFTKSENS. The interval 960–1337 is responsible for down-regulation through a process mediated by direct ubiquitination; that stretch reads SNDSLNSVSS…QHPRTKSSRL (378 aa). The segment covering 961 to 971 has biased composition (low complexity); sequence NDSLNSVSSSD. Phosphoserine occurs at positions 987, 1038, and 1042. Residues 1020–1169 form an interaction with catenins region; sequence ELDTPINYSL…TNYSIKYNEE (150 aa). Disordered regions lie at residues 1099 to 1169, 1190 to 1244, and 1311 to 1376; these read VSPY…YNEE, SQKQ…GQPQ, and IGTR…PEHY. Polar residues predominate over residues 1107–1130; that stretch reads ANGSETNRVGSNHGINQNVSQSLC. Residues 1146-1159 show a composition bias toward basic and acidic residues; it reads RYSEEEQHEEEERP. The span at 1190–1224 shows a compositional bias: low complexity; sequence SQKQSFSFSKSSSGQSSKTEHMSSSSENTSTPSSN. The span at 1225–1244 shows a compositional bias: polar residues; sequence AKRQNQLHPSSAQSRSGQPQ. Composition is skewed to low complexity over residues 1335–1345 and 1355–1366; these read SRLQGSSLSSE and SSGAKSPSKSGA. Phosphoserine occurs at positions 1360, 1371, 1385, 1392, and 1395. 5 disordered regions span residues 1403–1475, 1526–1569, 1583–1611, 1664–1717, and 1729–1836; these read SSVQ…VNAA, PPVQ…DSDD, MPTK…KPSQ, SPPN…DDNK, and NSAM…RVRG. Thr1438 carries the post-translational modification Phosphothreonine. 2 stretches are compositionally biased toward basic and acidic residues: residues 1448-1466 and 1540-1564; these read TKRE…RESG and EQPK…KDLL. Residue Ser1567 is modified to Phosphoserine. Positions 1683 to 1698 are enriched in basic and acidic residues; the sequence is EFEKRDTIPTEGRSTD. The segment covering 1735–1744 has biased composition (basic residues); sequence GKSHKPFRVK. A Phosphoserine modification is found at Ser1774. 2 stretches are compositionally biased toward basic and acidic residues: residues 1785–1794 and 1804–1813; these read YRTRVRKNAD and VFSDNKDSKK. Residues Ser1861, Ser1863, and Ser1864 each carry the phosphoserine modification. Residues 1866 to 1893 are highly charged; sequence DFDDDDVDLSREKAELRKAKENKESEAK. The span at 1881–1896 shows a compositional bias: basic and acidic residues; it reads LRKAKENKESEAKVTS. 3 disordered regions span residues 1881–1950, 1965–2011, and 2043–2072; these read LRKA…TDEK, HNSS…APKS, and ISSA…GGIL. 2 stretches are compositionally biased toward polar residues: residues 1897–1913 and 1928–1938; these read HTEL…TQAI and QKQSTFPQSSK. Over residues 1939-1950 the composition is skewed to basic and acidic residues; the sequence is DIPDRGAATDEK. Residues Ser1971 and Ser1973 each carry the phosphoserine modification. Over residues 1979–1991 the composition is skewed to basic and acidic residues; that stretch reads NNNKENEPIKETE. The tract at residues 2035–2059 is interaction with AXIN1; sequence EDDLLQECISSAMPKKKKPSRLKGD. A phosphoserine mark is found at Ser2088, Ser2093, Ser2125, Ser2129, Ser2130, and Ser2132. Disordered stretches follow at residues 2147–2635 and 2667–2714; these read PFHL…SGAT and NNPR…VPMR. Residue Thr2151 is modified to Phosphothreonine. Residues 2167 to 2674 form a basic region region; sequence ILKPGEKSTL…PINNPRSGRS (508 aa). The span at 2169–2187 shows a compositional bias: basic and acidic residues; the sequence is KPGEKSTLETKKIESESKG. Composition is skewed to polar residues over residues 2203–2223 and 2257–2271; these read VRSN…NMPS and ASKS…TTSP. Phosphoserine is present on residues Ser2260, Ser2270, and Ser2283. A compositionally biased stretch (polar residues) spans 2286-2331; it reads ARQTSQIGGSSKAPSRSGSRDSTPSRPAQQPLSRPIQSPGRNSISP. Low complexity predominate over residues 2348 to 2369; sequence TSSPSTASTKSSGSGKMSYTSP. 2 stretches are compositionally biased toward polar residues: residues 2370–2409 and 2418–2427; these read GRQM…NGNG and RMSSTKSSGS. The span at 2459–2477 shows a compositional bias: low complexity; it reads SASFESLSPSSRPASPTRS. Ser2473 and Ser2535 each carry phosphoserine. An interaction with DLG1 region spans residues 2475–2843; the sequence is TRSQAQTPVL…HSGSYLVTSV (369 aa). Residues 2518–2535 are compositionally biased toward basic and acidic residues; it reads NDGRPAKRHDIARSHSES. Polar residues predominate over residues 2555 to 2568; sequence SSSLPRVSTWRRTG. Residue Ser2569 is modified to Phosphoserine. The span at 2569-2579 shows a compositional bias: low complexity; it reads SSSSILSASSE. Residues 2580–2592 are compositionally biased toward basic and acidic residues; sequence SSEKAKSEDEKHV. Composition is skewed to polar residues over residues 2593 to 2608, 2620 to 2635, and 2668 to 2679; these read NSIS…QVSA, FSPT…SGAT, and NPRSGRSPTGNT. Residues Ser2671 and Ser2674 each carry the phosphoserine modification. Residues 2674–2843 are interaction with MAPRE1; that stretch reads SPTGNTPPVI…HSGSYLVTSV (170 aa). Thr2679 carries the post-translational modification Phosphothreonine. A phosphoserine mark is found at Ser2710 and Ser2724. Residues 2729-2843 are disordered; sequence DAPDQKGTEI…HSGSYLVTSV (115 aa). Positions 2741–2757 are enriched in polar residues; sequence GQNNPVPVSETNESSIV. The segment covering 2763-2774 has biased composition (low complexity); that stretch reads SSSSSSKHSSPS. Over residues 2784-2812 the composition is skewed to polar residues; it reads FNYNPSPRKSSADSTSARPSQIPTPVNNN. Ser2789 carries the post-translational modification Phosphoserine. The Microtubule tip localization signal motif lies at 2803 to 2806; sequence SQIP. Positions 2841–2843 match the PDZ-binding motif; it reads TSV.

It belongs to the adenomatous polyposis coli (APC) family. As to quaternary structure, forms homooligomers. Found in a complex consisting of ARHGEF4, APC and CTNNB1. Found in a complex composed of MACF1, APC, AXIN1, CTNNB1 and GSK3B. The complex composed, at least, of APC, CTNNB1 and GSK3B interacts with JPT1; the interaction requires the inactive form of GSK3B (phosphorylated at 'Ser-9'). Interacts with APC2. Interacts with DLG1 (via PDZ domains) and DLG3 (via PDZ domains). Interacts with alpha- and beta-catenins. Interacts with AXIN1 (via RGS domain). Interacts with ARHGEF4 (via N-terminus). Interacts (via C-terminal residues 2674-2843) with MAPRE1 (via C-terminal residues 206-211); the interaction inhibits association with and bundling of F-actin. Interacts with MAPRE2 and MAPRE3 (via C-terminus). Interacts with DIAPH1; DIAPH1 acts as a scaffold protein for MAPRE1 and APC to stabilize microtubules and promote cell migration. Interacts with DIAPH2. Interacts with SCRIB; may mediate APC targeting to adherens junctions of epithelial cells. Interacts with SPATA13 (via N-terminus and SH3 domain). Interacts with ASAP1 (via SH3 domain). Interacts (at the cell membrane) with AMER1 and AMER2 (via ARM repeats). Interacts with KHDRBS1. Interacts with actin; binds both to F-actin and actin filament bundles. Post-translationally, phosphorylated; phosphorylation enhances the F-actin bundling activity. Phosphorylated by GSK3B. In terms of processing, ubiquitinated, leading to its degradation by the proteasome. Ubiquitination is facilitated by Axin. Deubiquitinated by ZRANB1/TRABID. As to expression, expressed in a variety of tissues: brain, small intestine, colon, thymus, skeletal muscle, heart, prostate, lung, spleen, ovary, testis kidney, placenta, blood and liver. Isoform 1A: Very strongly expressed in brain but has relatively low expression levels in other tissues. Isoform 1B: Predominant form in all tissues except for brain, including gastric mucosa and blood.

The protein resides in the cell junction. The protein localises to the adherens junction. It is found in the cytoplasm. It localises to the cytoskeleton. Its subcellular location is the cell projection. The protein resides in the lamellipodium. The protein localises to the ruffle membrane. It is found in the cell membrane. In terms of biological role, tumor suppressor. Promotes rapid degradation of CTNNB1 and participates in Wnt signaling as a negative regulator. APC activity is correlated with its phosphorylation state. Activates the GEF activity of SPATA13 and ARHGEF4. Plays a role in hepatocyte growth factor (HGF)-induced cell migration. Required for MMP9 up-regulation via the JNK signaling pathway in colorectal tumor cells. Associates with both microtubules and actin filaments, components of the cytoskeleton. Plays a role in mediating the organization of F-actin into ordered bundles. Functions downstream of Rho GTPases and DIAPH1 to selectively stabilize microtubules. Acts as a mediator of ERBB2-dependent stabilization of microtubules at the cell cortex. It is required for the localization of MACF1 to the cell membrane and this localization of MACF1 is critical for its function in microtubule stabilization. The sequence is that of Adenomatous polyposis coli protein from Homo sapiens (Human).